The primary structure comprises 421 residues: MIKVLKKKLIVGLEIGTTKTTISVGEILEDDTINIIGIGLSKSIGIDRGIINDLKSIVECIKKVINQAETMANCNITSIYLALSNKYINCQNEIGIIPILQEEITKNDIENVIHTAKSVRIRNEHKILHIIPQEYSIDERTGIKNPIGLSGIRMQAIVHLITCHSSIKKNIIKAVESCGIRVDYSVFSGLASSESVLTTDERNLGVCIVDIGGGTTDIAIYTNGTLKHSCVIPYAGNTVTNDISYVFNIPFMYAEKIKIKYGYAMQSSDITEEEIKIVNEDNTIIQTFHKDKLTEVIESRYIELLTLINEEIKNTQKKLKKSGRIHKLGAGIVLTGGASNIKLFKNCAEKVFNIPVRIGCPKKNNINTAKLTNNTQTGSLSTVIGLLYFGKKYFYSHRNKNSYNFFKKWLQYINNWIKKEF.

This sequence belongs to the FtsA/MreB family. Self-interacts. Interacts with FtsZ.

Its subcellular location is the cell membrane. Its function is as follows. Cell division protein that is involved in the assembly of the Z ring. May serve as a membrane anchor for the Z ring. The polypeptide is Cell division protein FtsA (Buchnera aphidicola subsp. Baizongia pistaciae (strain Bp)).